A 238-amino-acid chain; its full sequence is Probable transcriptional regulatory protein IL0164 (238 aa).

Belongs to the TACO1 family.

It localises to the cytoplasm. The protein is Probable transcriptional regulatory protein IL0164 of Idiomarina loihiensis (strain ATCC BAA-735 / DSM 15497 / L2-TR).